We begin with the raw amino-acid sequence, 633 residues long: Telomere-binding protein 1 (633 aa).

The disordered stretch occupies residues 253 to 272; sequence HAADRDDDENSSGCVHPSTS. Residues 263–272 are compositionally biased toward polar residues; that stretch reads SSGCVHPSTS. The Ubiquitin-like domain maps to 351 to 430; sequence VKLTIKSFNI…LNDIGFTLEC (80 aa). Positions 506-615 are sufficient for telomeric DNA binding; it reads PFADPNSLAL…RVLAAQAYWS (110 aa). Residues 529 to 588 form the HTH myb-type domain; it reads GQRRIRRPFTVAEVELLVEAVEHLGTGRWRDVKFRAFENVHHRTYVDLKDKWKTLVHTAS. Residues 534–584 form the SANT domain; it reads RRPFTVAEVELLVEAVEHLGTGRWRDVKFRAFENVHHRTYVDLKDKWKTLV. Positions 557–584 form a DNA-binding region, H-T-H motif; the sequence is WRDVKFRAFENVHHRTYVDLKDKWKTLV.

In terms of assembly, homodimer. As to expression, ubiquitous.

The protein resides in the chromosome. The protein localises to the telomere. In terms of biological role, binds the telomeric double-stranded 5'TTTAGGG-3' repeat and regulates telomere length and structure. In Oryza sativa subsp. japonica (Rice), this protein is Telomere-binding protein 1 (TBP1).